A 228-amino-acid chain; its full sequence is Probable U3 small nucleolar RNA-associated protein 11 (228 aa).

Disordered regions lie at residues Met1–Lys23 and Ser192–Leu211. Basic and acidic residues predominate over residues Ala12–Lys23.

Belongs to the UTP11 family. As to quaternary structure, component of the ribosomal small subunit (SSU) processome.

Its subcellular location is the nucleus. It is found in the nucleolus. Functionally, involved in nucleolar processing of pre-18S ribosomal RNA. The protein is Probable U3 small nucleolar RNA-associated protein 11 of Arabidopsis thaliana (Mouse-ear cress).